The following is a 578-amino-acid chain: Avenacosidase 2 (578 aa).

A chloroplast-targeting transit peptide spans 1 to 57 (MALLCSALSNSTHPSFRSHIAGANSENLWHLSAHPAQKSKRRCNLTLSSRAAARISS). Residues Gln89, His193, and 238–239 (NE) contribute to the a beta-D-glucoside site. The active-site Proton donor is Glu239. A disulfide bond links Cys258 and Cys264. A beta-D-glucoside is bound by residues Tyr381, Glu454, Trp504, 511-512 (EW), and Phe520. The active-site Nucleophile is Glu454.

Belongs to the glycosyl hydrolase 1 family. Heteromultimer with P60A in a 1:1 stoichiometry. Aggregates to form the fibrillar stromacentre.

The protein resides in the plastid. The protein localises to the chloroplast stroma. It catalyses the reaction avenacoside B + H2O = 26-desgluco-avenacoside B + D-glucose. Functionally, beta-glucosidase acting as a preformed defense system. Hydrolyzes the bisdesmosides avenacosides A and B to 26-desgluco-avenacosides exhibiting fungicidal activity. Can use beta-fucoside &gt; beta-glucoside &gt; beta-galactoside &gt; beta-xyloside as substrates, but not alpha-glycosides, beta-thioglucosides and disaccharides. This is Avenacosidase 2 (P60B) from Avena sativa (Oat).